We begin with the raw amino-acid sequence, 130 residues long: Albumin-1 C (130 aa).

Residues 1–26 form the signal peptide; that stretch reads MASVKLASLIVLFATLGMFLTKNVGA. 3 cysteine pairs are disulfide-bonded: cysteine 29/cysteine 46, cysteine 33/cysteine 48, and cysteine 41/cysteine 58. Propeptides lie at residues 64 to 69 and 123 to 130; these read VFLRTN and LLKSVSTA.

The C-terminal glycine may be removed from PA1b. Major component of both the cotyledons and embryonic axes of mature seeds.

PA1b binds to basic 7S globulin (BG) and stimulates its phosphorylation activity. Involved in the signal transduction system to regulate the growth and differentiation as a hormone peptide. Toxic to various insects through binding to a high affinity binding site in the insect gut. The polypeptide is Albumin-1 C (Pisum sativum (Garden pea)).